The sequence spans 176 residues: MPIITDFKAIATGLFVTWKHIFRRSVTVEYPEVKRTPAPRYRARIVLTRDPEGGERCVACYLCSAACPVDCISMEATEDGNGRRYARWFRINFSRCIFCGLCAEACPTLAIQMTPDYEICERDIMELVYEKEDLLIDGCGKDPAYNFYRHAGIGVTQPRGAGEREEEPVDARGLMP.

2 consecutive 4Fe-4S ferredoxin-type domains span residues 45-77 (IVLT…MEAT) and 87-116 (RWFR…MTPD). Cysteine 57, cysteine 60, cysteine 63, cysteine 67, cysteine 96, cysteine 99, cysteine 102, and cysteine 106 together coordinate [4Fe-4S] cluster.

The protein belongs to the complex I 23 kDa subunit family. NDH-1 is composed of 14 different subunits. Subunits NuoA, H, J, K, L, M, N constitute the membrane sector of the complex. It depends on [4Fe-4S] cluster as a cofactor.

The protein localises to the cell inner membrane. It catalyses the reaction a quinone + NADH + 5 H(+)(in) = a quinol + NAD(+) + 4 H(+)(out). In terms of biological role, NDH-1 shuttles electrons from NADH, via FMN and iron-sulfur (Fe-S) centers, to quinones in the respiratory chain. The immediate electron acceptor for the enzyme in this species is believed to be ubiquinone. Couples the redox reaction to proton translocation (for every two electrons transferred, four hydrogen ions are translocated across the cytoplasmic membrane), and thus conserves the redox energy in a proton gradient. This Geobacter metallireducens (strain ATCC 53774 / DSM 7210 / GS-15) protein is NADH-quinone oxidoreductase subunit I 1.